Reading from the N-terminus, the 142-residue chain is Small heat shock protein IbpB (142 aa).

In terms of domain architecture, sHSP spans 26–137 (TGESQSFPPY…APQRIAISER (112 aa)).

Belongs to the small heat shock protein (HSP20) family. In terms of assembly, homodimer. Forms homomultimers of about 100-150 subunits at optimal growth temperatures. Conformation changes to oligomers at high temperatures or high ionic concentrations. The decrease in size of the multimers is accompanied by an increase in chaperone activity.

The protein resides in the cytoplasm. Functionally, associates with aggregated proteins, together with IbpA, to stabilize and protect them from irreversible denaturation and extensive proteolysis during heat shock and oxidative stress. Aggregated proteins bound to the IbpAB complex are more efficiently refolded and reactivated by the ATP-dependent chaperone systems ClpB and DnaK/DnaJ/GrpE. Its activity is ATP-independent. The polypeptide is Small heat shock protein IbpB (Citrobacter koseri (strain ATCC BAA-895 / CDC 4225-83 / SGSC4696)).